The chain runs to 463 residues: A-type ATP synthase subunit B (463 aa).

The protein belongs to the ATPase alpha/beta chains family. As to quaternary structure, has multiple subunits with at least A(3), B(3), C, D, E, F, H, I and proteolipid K(x).

It localises to the cell membrane. Functionally, component of the A-type ATP synthase that produces ATP from ADP in the presence of a proton gradient across the membrane. The B chain is a regulatory subunit. The sequence is that of A-type ATP synthase subunit B from Desulfurococcus sp. (strain SY).